Consider the following 468-residue polypeptide: Anthocyanidin 3-O-glucoside 2'''-O-xylosyltransferase (468 aa).

UDP-alpha-D-xylose is bound by residues Ser-284, 344–346 (IQQ), 361–369 (HCGFGSMWE), and 383–386 (HGEQ).

It belongs to the UDP-glycosyltransferase family.

The enzyme catalyses an anthocyanidin 3-O-beta-D-glucoside + UDP-alpha-D-xylose = an anthocyanidin 3-O-beta-D-sambubioside + UDP + 2 H(+). It participates in secondary metabolite biosynthesis; flavonoid biosynthesis. In terms of biological role, contributes to the last few anthocyanin biosynthetic steps. Converts cyanidin 3-O-glucoside to cyanidin 3-O-xylosyl(1-&gt;2)glucoside. Can use 3-O-glucosylated anthocyanidins/flavonols and uridine diphosphate (UDP)-xylose as substrates. This Arabidopsis thaliana (Mouse-ear cress) protein is Anthocyanidin 3-O-glucoside 2'''-O-xylosyltransferase (A3G2XYLT).